An 87-amino-acid polypeptide reads, in one-letter code: Costars family protein (87 aa).

Belongs to the costars family.

The polypeptide is Costars family protein (Oryza sativa subsp. indica (Rice)).